The primary structure comprises 196 residues: Protein LIGHT-DEPENDENT SHORT HYPOCOTYLS 6 (196 aa).

The segment covering 1 to 16 (MESADSGRSDPVKGDD) has biased composition (basic and acidic residues). 2 disordered regions span residues 1–36 (MESADSGRSDPVKGDDPGPSFVSSPPATPSRYESQK) and 149–196 (ARGI…AVPP). In terms of domain architecture, ALOG spans 31-158 (RYESQKRRDW…ARGIPYEKKK (128 aa)). The Nuclear localization signal motif lies at 156 to 160 (KKKRK).

Belongs to the plant homeotic and developmental regulators ALOG protein family.

It localises to the nucleus. Probable transcription regulator that acts as a developmental regulator by promoting cell growth in response to light. This chain is Protein LIGHT-DEPENDENT SHORT HYPOCOTYLS 6 (LSH6), found in Arabidopsis thaliana (Mouse-ear cress).